Here is a 372-residue protein sequence, read N- to C-terminus: 4-hydroxy-3-methylbut-2-en-1-yl diphosphate synthase (flavodoxin) (372 aa).

Residues C270, C273, C305, and E312 each contribute to the [4Fe-4S] cluster site.

This sequence belongs to the IspG family. It depends on [4Fe-4S] cluster as a cofactor.

The enzyme catalyses (2E)-4-hydroxy-3-methylbut-2-enyl diphosphate + oxidized [flavodoxin] + H2O + 2 H(+) = 2-C-methyl-D-erythritol 2,4-cyclic diphosphate + reduced [flavodoxin]. It functions in the pathway isoprenoid biosynthesis; isopentenyl diphosphate biosynthesis via DXP pathway; isopentenyl diphosphate from 1-deoxy-D-xylulose 5-phosphate: step 5/6. Functionally, converts 2C-methyl-D-erythritol 2,4-cyclodiphosphate (ME-2,4cPP) into 1-hydroxy-2-methyl-2-(E)-butenyl 4-diphosphate. The sequence is that of 4-hydroxy-3-methylbut-2-en-1-yl diphosphate synthase (flavodoxin) from Salmonella choleraesuis (strain SC-B67).